We begin with the raw amino-acid sequence, 292 residues long: RNA 5'-monophosphate methyltransferase (292 aa).

The segment at 1 to 21 is disordered; that stretch reads MAVPTELDGGSVKETAAEEES. Residues R46, N76, D110, 135–136, and M164 contribute to the S-adenosyl-L-methionine site; that span reads DF. Residues 53 to 274 form the Bin3-type SAM domain; sequence ELLRQLFPES…KQTIETHPIP (222 aa).

Belongs to the methyltransferase superfamily. As to quaternary structure, interacts with DICER1; the interaction may be mediated by RNA.

Its subcellular location is the cytoplasm. It carries out the reaction a 5'-end 5'-phospho-ribonucleoside-RNA + S-adenosyl-L-methionine = a 5'-end (5'-methylphospho)-ribonucleoside-RNA + S-adenosyl-L-homocysteine. The enzyme catalyses a 5'-end 5'-phospho-ribonucleoside-RNA + 2 S-adenosyl-L-methionine = a 5'-end (5'-bismethylphospho)-ribonucleoside-RNA + 2 S-adenosyl-L-homocysteine. Functionally, O-methyltransferase that specifically monomethylates 5'-monophosphate of cytoplasmic histidyl tRNA (tRNA(His)), acting as a capping enzyme by protecting tRNA(His) from cleavage by DICER1. Also able, with less efficiently, to methylate the 5' monophosphate of a subset of pre-miRNAs, acting as a negative regulator of miRNA processing. The 5' monophosphate of pre-miRNAs is recognized by DICER1 and is required for pre-miRNAs processing: methylation at this position reduces the processing of pre-miRNAs by DICER1. Was also reported to mediate dimethylation of pre-miR-145; however dimethylation cannot be reproduced by another group which observes a monomethylation of pre-miR-145. The polypeptide is RNA 5'-monophosphate methyltransferase (Homo sapiens (Human)).